The sequence spans 1046 residues: Translation initiation factor IF-2 (1046 aa).

Residues 49–448 (EAFPAEGSAP…MGAMVPRGNG (400 aa)) are disordered. Over residues 52-71 (PAEGSAPSSRPGGRPGNGAR) the composition is skewed to low complexity. A compositionally biased stretch (pro residues) spans 94–111 (RPGPGGRPVPGRPGPAPL). 2 stretches are compositionally biased toward low complexity: residues 112 to 139 (PGAS…SQPV) and 147 to 159 (PRPA…AAAP). Positions 160-176 (APAPSAPAPAPSAPAPA) are enriched in pro residues. Over residues 177–187 (PITSAPTAATP) the composition is skewed to low complexity. The span at 188–206 (PAAPQRPTPGGPRPGPAAP) shows a compositional bias: pro residues. Residues 210–222 (RTGGPGGPGGPGG) show a composition bias toward gly residues. Pro residues predominate over residues 223–235 (GPRPGPRPGPRPA). Low complexity predominate over residues 244-253 (SPAAGPRAAS). Pro residues-rich tracts occupy residues 260 to 281 (SAPP…PRPG) and 304 to 314 (RPTPGQMPPRP). The span at 320–333 (PRPNSNMFQPRPAG) shows a compositional bias: low complexity. The segment covering 334-414 (GAPGRPGGGG…AGAFGPGGRG (81 aa)) has biased composition (gly residues). The span at 415–426 (RPGRQRKSKRAK) shows a compositional bias: basic residues. The tr-type G domain occupies 539–711 (ARPPVVTVMG…VILTADASLD (173 aa)). The interval 548-555 (GHVDHGKT) is G1. 548–555 (GHVDHGKT) provides a ligand contact to GTP. The interval 573–577 (GITQH) is G2. Residues 598–601 (DTPG) are G3. Residues 598-602 (DTPGH) and 652-655 (NKVD) each bind GTP. Residues 652–655 (NKVD) are G4. Positions 688–690 (SAR) are G5.

This sequence belongs to the TRAFAC class translation factor GTPase superfamily. Classic translation factor GTPase family. IF-2 subfamily.

It localises to the cytoplasm. One of the essential components for the initiation of protein synthesis. Protects formylmethionyl-tRNA from spontaneous hydrolysis and promotes its binding to the 30S ribosomal subunits. Also involved in the hydrolysis of GTP during the formation of the 70S ribosomal complex. This is Translation initiation factor IF-2 from Parafrankia sp. (strain EAN1pec).